The primary structure comprises 419 residues: Peptide chain release factor subunit 1 (419 aa).

Belongs to the eukaryotic release factor 1 family. As to quaternary structure, heterodimer of two subunits, one of which binds GTP.

It localises to the cytoplasm. Its function is as follows. Directs the termination of nascent peptide synthesis (translation) in response to the termination codons UAA, UAG and UGA. This Methanococcus vannielii (strain ATCC 35089 / DSM 1224 / JCM 13029 / OCM 148 / SB) protein is Peptide chain release factor subunit 1.